We begin with the raw amino-acid sequence, 24 residues long: Brevinin-1GRa (24 aa).

As to expression, expressed by the skin glands.

The protein localises to the secreted. Antimicrobial peptide active against the Gram-positive bacterium S.aureus (MIC=12.5 uM) and against the Gram-negative bacteria E.coli (MIC=25 uM). This chain is Brevinin-1GRa, found in Odorrana grahami (Yunnanfu frog).